We begin with the raw amino-acid sequence, 179 residues long: Large ribosomal subunit protein uL5 (179 aa).

It belongs to the universal ribosomal protein uL5 family. In terms of assembly, part of the 50S ribosomal subunit; part of the 5S rRNA/L5/L18/L25 subcomplex. Contacts the 5S rRNA and the P site tRNA. Forms a bridge to the 30S subunit in the 70S ribosome.

In terms of biological role, this is one of the proteins that bind and probably mediate the attachment of the 5S RNA into the large ribosomal subunit, where it forms part of the central protuberance. In the 70S ribosome it contacts protein S13 of the 30S subunit (bridge B1b), connecting the 2 subunits; this bridge is implicated in subunit movement. Contacts the P site tRNA; the 5S rRNA and some of its associated proteins might help stabilize positioning of ribosome-bound tRNAs. The polypeptide is Large ribosomal subunit protein uL5 (Bordetella avium (strain 197N)).